Reading from the N-terminus, the 129-residue chain is Replication initiation control protein YabA (129 aa).

Zn(2+) is bound by residues H103, C105, C119, and C122.

The protein belongs to the YabA family. Homotetramer. Interacts with both DnaA and DnaN, acting as a bridge between these two proteins. It depends on Zn(2+) as a cofactor.

The protein resides in the cytoplasm. It is found in the nucleoid. Involved in control of chromosome replication initiation. Inhibits the cooperative binding of DnaA to the oriC region, thus negatively regulating initiation of chromosome replication. Inhibits the ability of DnaA-ATP to form a helix on DNA; does not disassemble preformed DnaA-DNA helices. Decreases the residence time of DnaA on the chromosome at its binding sites (oriC, replication forks and promoter-binding sites). Tethers DnaA to the replication machinery via the DNA polymerase beta sliding clamp subunit (dnaN). Associates with oriC and other DnaA targets on the chromosome in a DnaA-dependent manner. The chain is Replication initiation control protein YabA from Listeria welshimeri serovar 6b (strain ATCC 35897 / DSM 20650 / CCUG 15529 / CIP 8149 / NCTC 11857 / SLCC 5334 / V8).